The chain runs to 218 residues: Large ribosomal subunit protein uL4 (218 aa).

The disordered stretch occupies residues 54–106 (GTHAVKNRGAVSGGGRKPWKQKGTGRARQGSIRAPQWYHGGVAHGPVPRDYSQ).

The protein belongs to the universal ribosomal protein uL4 family. In terms of assembly, part of the 50S ribosomal subunit.

Its function is as follows. One of the primary rRNA binding proteins, this protein initially binds near the 5'-end of the 23S rRNA. It is important during the early stages of 50S assembly. It makes multiple contacts with different domains of the 23S rRNA in the assembled 50S subunit and ribosome. Forms part of the polypeptide exit tunnel. The sequence is that of Large ribosomal subunit protein uL4 from Bifidobacterium animalis subsp. lactis (strain AD011).